Consider the following 345-residue polypeptide: Heat-inducible transcription repressor HrcA (345 aa).

Belongs to the HrcA family.

Negative regulator of class I heat shock genes (grpE-dnaK-dnaJ and groELS operons). Prevents heat-shock induction of these operons. The protein is Heat-inducible transcription repressor HrcA of Listeria monocytogenes serotype 1/2a (strain 10403S).